Here is a 610-residue protein sequence, read N- to C-terminus: DNA mismatch repair protein MutL (610 aa).

This sequence belongs to the DNA mismatch repair MutL/HexB family.

Its function is as follows. This protein is involved in the repair of mismatches in DNA. It is required for dam-dependent methyl-directed DNA mismatch repair. May act as a 'molecular matchmaker', a protein that promotes the formation of a stable complex between two or more DNA-binding proteins in an ATP-dependent manner without itself being part of a final effector complex. The protein is DNA mismatch repair protein MutL of Rickettsia rickettsii (strain Sheila Smith).